The following is a 384-amino-acid chain: uncharacterized protein (384 aa).

This is an uncharacterized protein from Methanocaldococcus jannaschii (strain ATCC 43067 / DSM 2661 / JAL-1 / JCM 10045 / NBRC 100440) (Methanococcus jannaschii).